A 729-amino-acid chain; its full sequence is 1,4-alpha-glucan branching enzyme GlgB (729 aa).

Asp409 (nucleophile) is an active-site residue. Glu462 acts as the Proton donor in catalysis.

This sequence belongs to the glycosyl hydrolase 13 family. GlgB subfamily. In terms of assembly, monomer.

The catalysed reaction is Transfers a segment of a (1-&gt;4)-alpha-D-glucan chain to a primary hydroxy group in a similar glucan chain.. The protein operates within glycan biosynthesis; glycogen biosynthesis. Its function is as follows. Catalyzes the formation of the alpha-1,6-glucosidic linkages in glycogen by scission of a 1,4-alpha-linked oligosaccharide from growing alpha-1,4-glucan chains and the subsequent attachment of the oligosaccharide to the alpha-1,6 position. The polypeptide is 1,4-alpha-glucan branching enzyme GlgB (Saccharophagus degradans (strain 2-40 / ATCC 43961 / DSM 17024)).